The following is a 66-amino-acid chain: ATP synthase subunit c (66 aa).

The next 2 helical transmembrane spans lie at 3–23 (LTFF…GMLM) and 45–65 (IMGI…SFVI).

It belongs to the ATPase C chain family. F-type ATPases have 2 components, F(1) - the catalytic core - and F(0) - the membrane proton channel. F(1) has five subunits: alpha(3), beta(3), gamma(1), delta(1), epsilon(1). F(0) has three main subunits: a(1), b(2) and c(10-14). The alpha and beta chains form an alternating ring which encloses part of the gamma chain. F(1) is attached to F(0) by a central stalk formed by the gamma and epsilon chains, while a peripheral stalk is formed by the delta and b chains.

It is found in the cell membrane. F(1)F(0) ATP synthase produces ATP from ADP in the presence of a proton or sodium gradient. F-type ATPases consist of two structural domains, F(1) containing the extramembraneous catalytic core and F(0) containing the membrane proton channel, linked together by a central stalk and a peripheral stalk. During catalysis, ATP synthesis in the catalytic domain of F(1) is coupled via a rotary mechanism of the central stalk subunits to proton translocation. In terms of biological role, key component of the F(0) channel; it plays a direct role in translocation across the membrane. A homomeric c-ring of between 10-14 subunits forms the central stalk rotor element with the F(1) delta and epsilon subunits. The sequence is that of ATP synthase subunit c (atpE) from Streptococcus oralis.